Reading from the N-terminus, the 253-residue chain is Low affinity immunoglobulin gamma Fc region receptor III-B (253 aa).

A signal peptide spans M1–A20. The Extracellular segment spans residues A21 to Q207. 2 Ig-like C2-type domains span residues P24 to H105 and E120 to T189. 2 disulfide bridges follow: C47/C89 and C128/C172. 4 N-linked (GlcNAc...) asparagine glycosylation sites follow: N56, N63, N165, and N180. Residues I208–F226 form a helical membrane-spanning segment. Over S227–K253 the chain is Cytoplasmic.

In terms of assembly, forms a heterooligomeric complex with ITAM-containing signaling subunits FCER1G. Interacts (via transmembrane domain) with signaling subunits; this interaction is a prerequisite for receptor complex expression on the cell surface and intracellular signal transduction. Binds the Fc region of antigen-complexed IgG.

It is found in the cell membrane. Its function is as follows. Receptor for the invariable Fc fragment of immunoglobulin gamma (IgG). Optimally activated upon binding of clustered antigen-IgG complexes displayed on cell surfaces, triggers lysis of antibody-coated cells, a process known as antibody-dependent cellular cytotoxicity (ADCC). Does not bind free monomeric IgG, thus avoiding inappropriate effector cell activation in the absence of antigenic trigger. Mediates IgG effector functions on natural killer (NK) cells. Binds antigen-IgG complexes generated upon infection and triggers NK cell-dependent cytokine production and degranulation to limit viral load and propagation. Fc-binding subunit that associates with FCER1G adapters to form functional signaling complexes. Following the engagement of antigen-IgG complexes, triggers phosphorylation of immunoreceptor tyrosine-based activation motif (ITAM)-containing adapters with subsequent activation of phosphatidylinositol 3-kinase signaling and sustained elevation of intracellular calcium that ultimately drive NK cell activation. Mediates enhanced ADCC in response to afucosylated IgGs. The chain is Low affinity immunoglobulin gamma Fc region receptor III-B (FCGR3B) from Oryctolagus cuniculus (Rabbit).